A 289-amino-acid chain; its full sequence is Deoxyuridine 5'-triphosphate nucleotidohydrolase (289 aa).

Substrate-binding positions include 176–178 and 283–284; these read RSG and FG.

Belongs to the dUTPase family. Requires Mg(2+) as cofactor.

It carries out the reaction dUTP + H2O = dUMP + diphosphate + H(+). Its function is as follows. Involved in nucleotide metabolism: produces dUMP, the immediate precursor of thymidine nucleotides and decreases the intracellular concentration of dUTP to avoid uracil incorporation into viral DNA. This Equus caballus (Horse) protein is Deoxyuridine 5'-triphosphate nucleotidohydrolase.